A 503-amino-acid polypeptide reads, in one-letter code: UDP-N-acetylmuramoylalanine--D-glutamate ligase (503 aa).

129 to 135 contacts ATP; it reads GTNGKTT.

This sequence belongs to the MurCDEF family.

Its subcellular location is the cytoplasm. It catalyses the reaction UDP-N-acetyl-alpha-D-muramoyl-L-alanine + D-glutamate + ATP = UDP-N-acetyl-alpha-D-muramoyl-L-alanyl-D-glutamate + ADP + phosphate + H(+). It functions in the pathway cell wall biogenesis; peptidoglycan biosynthesis. Cell wall formation. Catalyzes the addition of glutamate to the nucleotide precursor UDP-N-acetylmuramoyl-L-alanine (UMA). The protein is UDP-N-acetylmuramoylalanine--D-glutamate ligase of Burkholderia orbicola (strain MC0-3).